Here is a 106-residue protein sequence, read N- to C-terminus: MSQKTVHDQDNALLLETGNTKVAPPPRYQVLLLNDDYTPMDFVIVVLQQFFAMDLKKATQVMLHVHTRGCGVCGFYTREVAESKVAQVNEFSRIHQHPLLCTMKQA.

Residues 1-10 (MSQKTVHDQD) are compositionally biased toward basic and acidic residues. The interval 1–22 (MSQKTVHDQDNALLLETGNTKV) is disordered.

The protein belongs to the ClpS family. Binds to the N-terminal domain of the chaperone ClpA.

In terms of biological role, involved in the modulation of the specificity of the ClpAP-mediated ATP-dependent protein degradation. In Xylella fastidiosa (strain 9a5c), this protein is ATP-dependent Clp protease adapter protein ClpS.